A 357-amino-acid polypeptide reads, in one-letter code: UDP-N-acetylglucosamine--N-acetylmuramyl-(pentapeptide) pyrophosphoryl-undecaprenol N-acetylglucosamine transferase (357 aa).

UDP-N-acetyl-alpha-D-glucosamine contacts are provided by residues 13–15 (TGG), asparagine 125, arginine 161, serine 189, isoleucine 243, and glutamine 288.

Belongs to the glycosyltransferase 28 family. MurG subfamily.

The protein localises to the cell inner membrane. The enzyme catalyses di-trans,octa-cis-undecaprenyl diphospho-N-acetyl-alpha-D-muramoyl-L-alanyl-D-glutamyl-meso-2,6-diaminopimeloyl-D-alanyl-D-alanine + UDP-N-acetyl-alpha-D-glucosamine = di-trans,octa-cis-undecaprenyl diphospho-[N-acetyl-alpha-D-glucosaminyl-(1-&gt;4)]-N-acetyl-alpha-D-muramoyl-L-alanyl-D-glutamyl-meso-2,6-diaminopimeloyl-D-alanyl-D-alanine + UDP + H(+). It functions in the pathway cell wall biogenesis; peptidoglycan biosynthesis. In terms of biological role, cell wall formation. Catalyzes the transfer of a GlcNAc subunit on undecaprenyl-pyrophosphoryl-MurNAc-pentapeptide (lipid intermediate I) to form undecaprenyl-pyrophosphoryl-MurNAc-(pentapeptide)GlcNAc (lipid intermediate II). The protein is UDP-N-acetylglucosamine--N-acetylmuramyl-(pentapeptide) pyrophosphoryl-undecaprenol N-acetylglucosamine transferase of Polynucleobacter asymbioticus (strain DSM 18221 / CIP 109841 / QLW-P1DMWA-1) (Polynucleobacter necessarius subsp. asymbioticus).